A 484-amino-acid polypeptide reads, in one-letter code: MTTSGVRVRIAPSPTGEPHVGTAYIALFNYLFAKKHGGEFILRIEDTDATRSTPEFETKVLDALKWCGLEWKEGPDIGGPYGPYRQSDRKPIYQPYAQELLDKGHAFRCFCTPARLEQMREAQRAAGKPPKYDGLCLSLTAEEVTSRTAAGEASVIRMKIPPEGSCDFTDGVYGDVSIPWDSVDMQVLIKADGMPTYHMANVIDDHLMKITHVARGEEWLASVPKHILLYRYFGWDQPVFMHLSLMRNADKSKLSKRKNPTSISYYSALGYIPEALMNFLGLFFIQIAEGEELLTMDELSEKFDPDNLSKAGAIFDIQKLDWLNGRWIREKLSEEEFQARVLAWAMENDRLKAGLRLSQTRISKLGELPDLAGFLLKSDLGLQPSDFAKIKSPPEEILEILNTVQPDLEKILEWNVETIEAELRAISDRMGKKLKVVVSPLFVAVSGSPRSLPLFDSMAILGRSVVRQRLKLAAQAVAALVGAK.

The short motif at 12-22 (PSPTGEPHVGT) is the 'HIGH' region element. The 'KMSKS' region motif lies at 253–257 (KLSKR). K256 is an ATP binding site.

Belongs to the class-I aminoacyl-tRNA synthetase family. Glutamate--tRNA ligase type 1 subfamily. In terms of assembly, monomer.

It is found in the cytoplasm. It catalyses the reaction tRNA(Glu) + L-glutamate + ATP = L-glutamyl-tRNA(Glu) + AMP + diphosphate. In terms of biological role, catalyzes the attachment of glutamate to tRNA(Glu) in a two-step reaction: glutamate is first activated by ATP to form Glu-AMP and then transferred to the acceptor end of tRNA(Glu). The sequence is that of Glutamate--tRNA ligase from Rhizobium etli (strain CIAT 652).